The primary structure comprises 264 residues: Thymidylate synthase (264 aa).

Arg-21 lines the dUMP pocket. A (6R)-5,10-methylene-5,6,7,8-tetrahydrofolate-binding site is contributed by His-51. 126–127 (RR) serves as a coordination point for dUMP. The active-site Nucleophile is Cys-146. DUMP is bound by residues 166–169 (RSAD), Asn-177, and 207–209 (HLY). Asp-169 is a (6R)-5,10-methylene-5,6,7,8-tetrahydrofolate binding site. Ala-263 is a (6R)-5,10-methylene-5,6,7,8-tetrahydrofolate binding site.

It belongs to the thymidylate synthase family. Bacterial-type ThyA subfamily. In terms of assembly, homodimer.

Its subcellular location is the cytoplasm. It carries out the reaction dUMP + (6R)-5,10-methylene-5,6,7,8-tetrahydrofolate = 7,8-dihydrofolate + dTMP. It participates in pyrimidine metabolism; dTTP biosynthesis. Functionally, catalyzes the reductive methylation of 2'-deoxyuridine-5'-monophosphate (dUMP) to 2'-deoxythymidine-5'-monophosphate (dTMP) while utilizing 5,10-methylenetetrahydrofolate (mTHF) as the methyl donor and reductant in the reaction, yielding dihydrofolate (DHF) as a by-product. This enzymatic reaction provides an intracellular de novo source of dTMP, an essential precursor for DNA biosynthesis. This is Thymidylate synthase from Alkalilimnicola ehrlichii (strain ATCC BAA-1101 / DSM 17681 / MLHE-1).